Consider the following 259-residue polypeptide: Bisphosphoglycerate mutase (259 aa).

Ser-2 carries the post-translational modification N-acetylserine. Lys-3 and Lys-5 each carry an N-linked (Glc) (glycation) lysine; in vitro glycan. Residue 10–17 (RHGEGAWN) coordinates substrate. His-11 functions as the Tele-phosphohistidine intermediate in the catalytic mechanism. N-linked (Glc) (glycation) lysine; in vitro glycosylation occurs at Lys-18. 23–24 (CS) lines the substrate pocket. An N-linked (Glc) (glycation) lysine; in vitro glycan is attached at Lys-43. Residues Arg-62, 89–92 (ERHY), Arg-100, and 116–117 (RR) contribute to the substrate site. Catalysis depends on Glu-89, which acts as the Proton donor/acceptor. Thr-122 bears the Phosphothreonine mark. N-linked (Glc) (glycation) lysine glycosylation is present at Lys-159. 189-190 (GN) serves as a coordination point for substrate. Lys-197 carries N-linked (Glc) (glycation) lysine; in vitro glycosylation.

The protein belongs to the phosphoglycerate mutase family. BPG-dependent PGAM subfamily. In terms of assembly, homodimer. In terms of processing, glycation of Lys-159 in diabetic patients inactivates the enzyme. In terms of tissue distribution, expressed in red blood cells. Expressed in non-erythroid cells of the placenta; present in the syncytiotrophoblast layer of the placental villi at the feto-maternal interface (at protein level).

The enzyme catalyses (2R)-3-phospho-glyceroyl phosphate = (2R)-2,3-bisphosphoglycerate + H(+). It catalyses the reaction (2R)-2-phosphoglycerate = (2R)-3-phosphoglycerate. With respect to regulation, at alkaline pH BPGM favors the synthase reaction; however, at lower pH the phosphatase reaction is dominant. Inhibited by citrate. In terms of biological role, plays a major role in regulating hemoglobin oxygen affinity by controlling the levels of its allosteric effector 2,3-bisphosphoglycerate (2,3-BPG). Also exhibits mutase (EC 5.4.2.11) activity. The polypeptide is Bisphosphoglycerate mutase (BPGM) (Homo sapiens (Human)).